The primary structure comprises 245 residues: 3-deoxy-manno-octulosonate cytidylyltransferase (245 aa).

Belongs to the KdsB family.

It is found in the cytoplasm. It carries out the reaction 3-deoxy-alpha-D-manno-oct-2-ulosonate + CTP = CMP-3-deoxy-beta-D-manno-octulosonate + diphosphate. It functions in the pathway nucleotide-sugar biosynthesis; CMP-3-deoxy-D-manno-octulosonate biosynthesis; CMP-3-deoxy-D-manno-octulosonate from 3-deoxy-D-manno-octulosonate and CTP: step 1/1. The protein operates within bacterial outer membrane biogenesis; lipopolysaccharide biosynthesis. Functionally, activates KDO (a required 8-carbon sugar) for incorporation into bacterial lipopolysaccharide in Gram-negative bacteria. This is 3-deoxy-manno-octulosonate cytidylyltransferase from Rhodopseudomonas palustris (strain HaA2).